The following is a 316-amino-acid chain: Beta-ketoacyl-[acyl-carrier-protein] synthase III (316 aa).

Catalysis depends on residues C112 and H243. Positions 244–248 are ACP-binding; it reads QANLR. The active site involves N273.

The protein belongs to the thiolase-like superfamily. FabH family. In terms of assembly, homodimer.

It is found in the cytoplasm. It carries out the reaction malonyl-[ACP] + acetyl-CoA + H(+) = 3-oxobutanoyl-[ACP] + CO2 + CoA. It functions in the pathway lipid metabolism; fatty acid biosynthesis. Its function is as follows. Catalyzes the condensation reaction of fatty acid synthesis by the addition to an acyl acceptor of two carbons from malonyl-ACP. Catalyzes the first condensation reaction which initiates fatty acid synthesis and may therefore play a role in governing the total rate of fatty acid production. Possesses both acetoacetyl-ACP synthase and acetyl transacylase activities. Its substrate specificity determines the biosynthesis of branched-chain and/or straight-chain of fatty acids. The chain is Beta-ketoacyl-[acyl-carrier-protein] synthase III from Haemophilus influenzae (strain 86-028NP).